The primary structure comprises 96 residues: Aspartyl/glutamyl-tRNA(Asn/Gln) amidotransferase subunit C (96 aa).

It belongs to the GatC family. In terms of assembly, heterotrimer of A, B and C subunits.

It carries out the reaction L-glutamyl-tRNA(Gln) + L-glutamine + ATP + H2O = L-glutaminyl-tRNA(Gln) + L-glutamate + ADP + phosphate + H(+). The enzyme catalyses L-aspartyl-tRNA(Asn) + L-glutamine + ATP + H2O = L-asparaginyl-tRNA(Asn) + L-glutamate + ADP + phosphate + 2 H(+). Allows the formation of correctly charged Asn-tRNA(Asn) or Gln-tRNA(Gln) through the transamidation of misacylated Asp-tRNA(Asn) or Glu-tRNA(Gln) in organisms which lack either or both of asparaginyl-tRNA or glutaminyl-tRNA synthetases. The reaction takes place in the presence of glutamine and ATP through an activated phospho-Asp-tRNA(Asn) or phospho-Glu-tRNA(Gln). The chain is Aspartyl/glutamyl-tRNA(Asn/Gln) amidotransferase subunit C from Leptospira interrogans serogroup Icterohaemorrhagiae serovar copenhageni (strain Fiocruz L1-130).